The chain runs to 131 residues: Small ribosomal subunit protein uS8 (131 aa).

The protein belongs to the universal ribosomal protein uS8 family. As to quaternary structure, part of the 30S ribosomal subunit. Contacts proteins S5 and S12.

Functionally, one of the primary rRNA binding proteins, it binds directly to 16S rRNA central domain where it helps coordinate assembly of the platform of the 30S subunit. This chain is Small ribosomal subunit protein uS8, found in Hydrogenovibrio crunogenus (strain DSM 25203 / XCL-2) (Thiomicrospira crunogena).